A 382-amino-acid chain; its full sequence is MIASTGKTNLLGLTQQEMEKFFDSIGEKRFRAGQVMKWIHHFGVDDFDAMTNVSKALREKLKACAEVRGPEVVSEDISSDGTRKWVVRVESGSCVETVYIPQGKRGTLCVSSQAGCALDCSFCSTGKQGFNSNLTAAEVIGQVWIANKSFGSVPATVDRAITNVVMMGMGEPLLNFDNVIAAMHLMMDDLGYGISKRRVTLSTSGVVPMIDELSKHIDVSLALSLHAPNDALRNQLVPINKKYPLKMLLESCRRYMSSLGEKRVLTIEYTMLKDINDKVEHAVEMIELLKDTPCKINLIPFNPFPHSGYERPSNNAIRRFQDLLHQAGYNVTVRTTRGEDIDAACGQLVGQVMDRTRRSERYIAVRELSAEADAAPVAVTRT.

The active-site Proton acceptor is the Glu96. The Radical SAM core domain occupies 102 to 342 (QGKRGTLCVS…VRTTRGEDID (241 aa)). A disulfide bridge connects residues Cys109 and Cys345. Cys116, Cys120, and Cys123 together coordinate [4Fe-4S] cluster. Residues 170–171 (GE), Ser202, 224–226 (SLH), and Asn302 each bind S-adenosyl-L-methionine. Cys345 (S-methylcysteine intermediate) is an active-site residue.

The protein belongs to the radical SAM superfamily. RlmN family. It depends on [4Fe-4S] cluster as a cofactor.

The protein resides in the cytoplasm. It carries out the reaction adenosine(2503) in 23S rRNA + 2 reduced [2Fe-2S]-[ferredoxin] + 2 S-adenosyl-L-methionine = 2-methyladenosine(2503) in 23S rRNA + 5'-deoxyadenosine + L-methionine + 2 oxidized [2Fe-2S]-[ferredoxin] + S-adenosyl-L-homocysteine. The enzyme catalyses adenosine(37) in tRNA + 2 reduced [2Fe-2S]-[ferredoxin] + 2 S-adenosyl-L-methionine = 2-methyladenosine(37) in tRNA + 5'-deoxyadenosine + L-methionine + 2 oxidized [2Fe-2S]-[ferredoxin] + S-adenosyl-L-homocysteine. Specifically methylates position 2 of adenine 2503 in 23S rRNA and position 2 of adenine 37 in tRNAs. m2A2503 modification seems to play a crucial role in the proofreading step occurring at the peptidyl transferase center and thus would serve to optimize ribosomal fidelity. The polypeptide is Dual-specificity RNA methyltransferase RlmN (Pseudomonas syringae pv. syringae (strain B728a)).